The chain runs to 345 residues: Anthranilate phosphoribosyltransferase (345 aa).

Residues glycine 84, glycine 87–aspartate 88, threonine 92, asparagine 94–threonine 97, lysine 112–serine 120, and serine 124 each bind 5-phospho-alpha-D-ribose 1-diphosphate. Glycine 84 is a binding site for anthranilate. Residue serine 96 coordinates Mg(2+). Position 115 (asparagine 115) interacts with anthranilate. Arginine 170 serves as a coordination point for anthranilate. Residues aspartate 229 and glutamate 230 each contribute to the Mg(2+) site.

The protein belongs to the anthranilate phosphoribosyltransferase family. As to quaternary structure, homodimer. Requires Mg(2+) as cofactor.

It carries out the reaction N-(5-phospho-beta-D-ribosyl)anthranilate + diphosphate = 5-phospho-alpha-D-ribose 1-diphosphate + anthranilate. The protein operates within amino-acid biosynthesis; L-tryptophan biosynthesis; L-tryptophan from chorismate: step 2/5. In terms of biological role, catalyzes the transfer of the phosphoribosyl group of 5-phosphorylribose-1-pyrophosphate (PRPP) to anthranilate to yield N-(5'-phosphoribosyl)-anthranilate (PRA). This Xanthomonas campestris pv. campestris (strain B100) protein is Anthranilate phosphoribosyltransferase.